A 525-amino-acid chain; its full sequence is Bifunctional purine biosynthesis protein PurH (525 aa).

One can recognise an MGS-like domain in the interval 1 to 147 (MTKIERALIS…KNWAHVAIVT (147 aa)).

This sequence belongs to the PurH family.

It carries out the reaction (6R)-10-formyltetrahydrofolate + 5-amino-1-(5-phospho-beta-D-ribosyl)imidazole-4-carboxamide = 5-formamido-1-(5-phospho-D-ribosyl)imidazole-4-carboxamide + (6S)-5,6,7,8-tetrahydrofolate. It catalyses the reaction IMP + H2O = 5-formamido-1-(5-phospho-D-ribosyl)imidazole-4-carboxamide. The protein operates within purine metabolism; IMP biosynthesis via de novo pathway; 5-formamido-1-(5-phospho-D-ribosyl)imidazole-4-carboxamide from 5-amino-1-(5-phospho-D-ribosyl)imidazole-4-carboxamide (10-formyl THF route): step 1/1. Its pathway is purine metabolism; IMP biosynthesis via de novo pathway; IMP from 5-formamido-1-(5-phospho-D-ribosyl)imidazole-4-carboxamide: step 1/1. In Chromobacterium violaceum (strain ATCC 12472 / DSM 30191 / JCM 1249 / CCUG 213 / NBRC 12614 / NCIMB 9131 / NCTC 9757 / MK), this protein is Bifunctional purine biosynthesis protein PurH.